A 339-amino-acid chain; its full sequence is D-erythrose-4-phosphate dehydrogenase (339 aa).

Residue 12–13 participates in NAD(+) binding; that stretch reads RI. Residues 154–156, R200, 213–214, and R236 each bind substrate; these read SCT and TK. The Nucleophile role is filled by C155. Position 318 (N318) interacts with NAD(+).

Belongs to the glyceraldehyde-3-phosphate dehydrogenase family. Epd subfamily. In terms of assembly, homotetramer.

Its subcellular location is the cytoplasm. It carries out the reaction D-erythrose 4-phosphate + NAD(+) + H2O = 4-phospho-D-erythronate + NADH + 2 H(+). The protein operates within cofactor biosynthesis; pyridoxine 5'-phosphate biosynthesis; pyridoxine 5'-phosphate from D-erythrose 4-phosphate: step 1/5. Functionally, catalyzes the NAD-dependent conversion of D-erythrose 4-phosphate to 4-phosphoerythronate. In Photorhabdus laumondii subsp. laumondii (strain DSM 15139 / CIP 105565 / TT01) (Photorhabdus luminescens subsp. laumondii), this protein is D-erythrose-4-phosphate dehydrogenase.